We begin with the raw amino-acid sequence, 340 residues long: Ketol-acid reductoisomerase (NADP(+)) (340 aa).

Positions 2–182 (AELYYDNQAD…GCTRAGVLRT (181 aa)) constitute a KARI N-terminal Rossmann domain. NADP(+)-binding positions include 25–28 (FGSQ), S51, S53, and 83–86 (DIGQ). H108 is a catalytic residue. Residue G134 coordinates NADP(+). The KARI C-terminal knotted domain occupies 183 to 328 (TFAEETETDL…RELRRMMPFV (146 aa)). Positions 191, 195, 227, and 231 each coordinate Mg(2+). Position 252 (S252) interacts with substrate.

The protein belongs to the ketol-acid reductoisomerase family. Mg(2+) serves as cofactor.

It catalyses the reaction (2R)-2,3-dihydroxy-3-methylbutanoate + NADP(+) = (2S)-2-acetolactate + NADPH + H(+). The enzyme catalyses (2R,3R)-2,3-dihydroxy-3-methylpentanoate + NADP(+) = (S)-2-ethyl-2-hydroxy-3-oxobutanoate + NADPH + H(+). It participates in amino-acid biosynthesis; L-isoleucine biosynthesis; L-isoleucine from 2-oxobutanoate: step 2/4. Its pathway is amino-acid biosynthesis; L-valine biosynthesis; L-valine from pyruvate: step 2/4. Its function is as follows. Involved in the biosynthesis of branched-chain amino acids (BCAA). Catalyzes an alkyl-migration followed by a ketol-acid reduction of (S)-2-acetolactate (S2AL) to yield (R)-2,3-dihydroxy-isovalerate. In the isomerase reaction, S2AL is rearranged via a Mg-dependent methyl migration to produce 3-hydroxy-3-methyl-2-ketobutyrate (HMKB). In the reductase reaction, this 2-ketoacid undergoes a metal-dependent reduction by NADPH to yield (R)-2,3-dihydroxy-isovalerate. The polypeptide is Ketol-acid reductoisomerase (NADP(+)) (Chloroflexus aggregans (strain MD-66 / DSM 9485)).